Reading from the N-terminus, the 326-residue chain is Protein-arginine N-acetylglucosaminyltransferase NleB2 (326 aa).

UDP-N-acetyl-alpha-D-glucosamine contacts are provided by residues 45 to 47, tyrosine 69, and 216 to 219; these read QWF and YLDM. A DXD motif motif is present at residues 218–220; the sequence is DMD. Residue aspartate 220 coordinates Mn(2+). The active-site Proton acceptor is glutamate 250. 2 residues coordinate Mn(2+): asparagine 317 and serine 319. UDP-N-acetyl-alpha-D-glucosamine is bound by residues serine 319 and 324–326; that span reads SSW.

The protein belongs to the glycosyltransferase NleB family. The cofactor is Mn(2+).

It localises to the secreted. It is found in the host cell. The catalysed reaction is L-arginyl-[protein] + UDP-N-acetyl-alpha-D-glucosamine = N(omega)-(N-acetyl-beta-D-glucosaminyl)-L-arginyl-[protein] + UDP + H(+). Its function is as follows. Protein-arginine N-acetylglucosaminyltransferase effector that catalyzes the transfer of a single N-acetylglucosamine (GlcNAc) to a conserved arginine residue of host target proteins. In contrast to NleB1, not able to disrupt TNF signaling in infected cells. Shows a lower enzymatic activity than NleB1. This chain is Protein-arginine N-acetylglucosaminyltransferase NleB2, found in Escherichia coli O145:H28 (strain RM12581).